We begin with the raw amino-acid sequence, 353 residues long: Chorismate synthase (353 aa).

Residue arginine 48 participates in NADP(+) binding. Residues 128–130 (RAS), glycine 280, 295–299 (KPIPS), and arginine 321 each bind FMN.

It belongs to the chorismate synthase family. As to quaternary structure, homotetramer. Requires FMNH2 as cofactor.

The enzyme catalyses 5-O-(1-carboxyvinyl)-3-phosphoshikimate = chorismate + phosphate. The protein operates within metabolic intermediate biosynthesis; chorismate biosynthesis; chorismate from D-erythrose 4-phosphate and phosphoenolpyruvate: step 7/7. Catalyzes the anti-1,4-elimination of the C-3 phosphate and the C-6 proR hydrogen from 5-enolpyruvylshikimate-3-phosphate (EPSP) to yield chorismate, which is the branch point compound that serves as the starting substrate for the three terminal pathways of aromatic amino acid biosynthesis. This reaction introduces a second double bond into the aromatic ring system. This Nitratidesulfovibrio vulgaris (strain DSM 19637 / Miyazaki F) (Desulfovibrio vulgaris) protein is Chorismate synthase.